The sequence spans 908 residues: DNA mismatch repair protein MutS (908 aa).

ATP is bound at residue 629 to 636 (GPNMAGKS). Positions 822–863 (ADEADGAPSEDPPSEDPPSGDGVRAKKGEADAVPDLEDSQAN) are disordered.

It belongs to the DNA mismatch repair MutS family.

Its function is as follows. This protein is involved in the repair of mismatches in DNA. It is possible that it carries out the mismatch recognition step. This protein has a weak ATPase activity. The polypeptide is DNA mismatch repair protein MutS (Salinibacter ruber (strain DSM 13855 / M31)).